The sequence spans 639 residues: Threonine--tRNA ligase (639 aa).

One can recognise a TGS domain in the interval 1 to 61 (MIHITLPDGS…TADCRLSIIT (61 aa)). The interval 242–533 (DHRKLGRELD…LLEQHAGALP (292 aa)) is catalytic. Zn(2+) is bound by residues Cys333, His384, and His510.

The protein belongs to the class-II aminoacyl-tRNA synthetase family. As to quaternary structure, homodimer. Requires Zn(2+) as cofactor.

It is found in the cytoplasm. The catalysed reaction is tRNA(Thr) + L-threonine + ATP = L-threonyl-tRNA(Thr) + AMP + diphosphate + H(+). Its function is as follows. Catalyzes the attachment of threonine to tRNA(Thr) in a two-step reaction: L-threonine is first activated by ATP to form Thr-AMP and then transferred to the acceptor end of tRNA(Thr). Also edits incorrectly charged L-seryl-tRNA(Thr). The polypeptide is Threonine--tRNA ligase (Verminephrobacter eiseniae (strain EF01-2)).